The chain runs to 292 residues: Mycothiol acetyltransferase (292 aa).

N-acetyltransferase domains follow at residues 13–168 and 159–292; these read ALDR…KWLQ and KSVA…VYEK. Residue E40 participates in 1D-myo-inositol 2-(L-cysteinylamino)-2-deoxy-alpha-D-glucopyranoside binding. Acetyl-CoA is bound at residue 77 to 79; sequence LAV. The 1D-myo-inositol 2-(L-cysteinylamino)-2-deoxy-alpha-D-glucopyranoside site is built by E179, K218, and E226. Acetyl-CoA is bound by residues 230-232 and 237-243; these read VGL and RGRGLGD. 1D-myo-inositol 2-(L-cysteinylamino)-2-deoxy-alpha-D-glucopyranoside is bound at residue Y264.

The protein belongs to the acetyltransferase family. MshD subfamily. In terms of assembly, monomer.

The enzyme catalyses 1D-myo-inositol 2-(L-cysteinylamino)-2-deoxy-alpha-D-glucopyranoside + acetyl-CoA = mycothiol + CoA + H(+). Its function is as follows. Catalyzes the transfer of acetyl from acetyl-CoA to desacetylmycothiol (Cys-GlcN-Ins) to form mycothiol. The polypeptide is Mycothiol acetyltransferase (Corynebacterium glutamicum (strain ATCC 13032 / DSM 20300 / JCM 1318 / BCRC 11384 / CCUG 27702 / LMG 3730 / NBRC 12168 / NCIMB 10025 / NRRL B-2784 / 534)).